Here is a 187-residue protein sequence, read N- to C-terminus: 5-formyltetrahydrofolate cyclo-ligase (187 aa).

Residues 6-10 (RQQIR), 139-146 (GMGGGFYD), and D178 each bind ATP.

Belongs to the 5-formyltetrahydrofolate cyclo-ligase family.

The enzyme catalyses (6S)-5-formyl-5,6,7,8-tetrahydrofolate + ATP = (6R)-5,10-methenyltetrahydrofolate + ADP + phosphate. It functions in the pathway one-carbon metabolism; tetrahydrofolate interconversion. Its function is as follows. Involved in the removal of 5-formyltetrahydrofolate. In vitro, it is a potent inhibitor of various folate-dependent enzymes in the C1 metabolism network and in vivo it might function as a folate storage. 5-formyltetrahydrofolate is also used as an antifolate rescue agent in cancer chemotherapy. Catalyzes the irreversible ATP-dependent transformation of 5-formyltetrahydrofolate (5-CHO-THF) to form 5,10-methenyltetrahydrofolate (5,10-CH=THF). The reverse reaction is catalyzed by the serine hydroxymethyltransferase GlyA (SHMT). This Haemophilus influenzae (strain ATCC 51907 / DSM 11121 / KW20 / Rd) protein is 5-formyltetrahydrofolate cyclo-ligase.